We begin with the raw amino-acid sequence, 124 residues long: uncharacterized protein (124 aa).

The N-terminal stretch at 1 to 19 (MRLLVQKVILIYLARYAKS) is a signal peptide. Helical transmembrane passes span 37–57 (IAEF…GVKF) and 86–108 (LGAL…IIII).

The protein resides in the membrane. This is an uncharacterized protein from Saccharomyces cerevisiae (strain ATCC 204508 / S288c) (Baker's yeast).